A 312-amino-acid polypeptide reads, in one-letter code: Putative mitochondrial transporter UCP3 (312 aa).

Residues 1–10 (MVGLKPSDVP) are Mitochondrial intermembrane-facing. A helical membrane pass occupies residues 11 to 32 (PTMAVKFLGAGTAACFADLVTF). 3 Solcar repeats span residues 11–105 (PTMA…VKQV), 114–206 (SSLT…LKEK), and 215–300 (DNFP…LKRA). At 33–76 (PLDTAKVRLQIQGENQAVQTARLVQYRGVLGTILTMVRTEGPCS) the chain is on the mitochondrial matrix side. A helical membrane pass occupies residues 77 to 99 (PYNGLVAGLQRQMSFASIRIGLY). Residues 100-119 (DSVKQVYTPKGADNSSLTTR) lie on the Mitochondrial intermembrane side of the membrane. The helical transmembrane segment at 120 to 136 (ILAGCTTGAMAVTCAQP) threads the bilayer. The Mitochondrial matrix portion of the chain corresponds to 137–183 (TDVVKVRFQASIHLGPSRSDRKYSGTMDAYRTIAREEGVRGLWKGTL). The helical transmembrane segment at 184-200 (PNIMRNAIVNCAEVVTY) threads the bilayer. The Mitochondrial intermembrane segment spans residues 201–217 (DILKEKLLDYHLLTDNF). Residues 218-237 (PCHFVSAFGAGFCATVVASP) form a helical membrane-spanning segment. Topologically, residues 238-271 (VDVVKTRYMNSPPGQYFSPLDCMIKMVAQEGPTA) are mitochondrial matrix. Residues 272 to 294 (FYKGFTPSFLRLGSWNVVMFVTY) form a helical membrane-spanning segment. A purine nucleotide binding region spans residues 279–301 (SFLRLGSWNVVMFVTYEQLKRAL). Topologically, residues 295 to 312 (EQLKRALMKVQMLRESPF) are mitochondrial intermembrane.

The protein belongs to the mitochondrial carrier (TC 2.A.29) family. Interacts with HAX1; the interaction is direct and calcium-dependent. As to expression, only in skeletal muscle and heart. Also expressed in white and brown adipose tissues. Is more expressed in glycolytic than in oxidative skeletal muscles.

The protein localises to the mitochondrion inner membrane. The proton transporter activity is activated by fatty acids (in vitro). The proton transporter activity is inhibited by ATP and ADP (in vitro). The effect of Ubiquinone/coenzyme Q10 on the proton transporter activity in reconstituted membranes is unclear (in vitro). Its function is as follows. Putative transmembrane transporter that plays a role in mitochondrial metabolism via an as yet unclear mechanism. Originally, this mitochondrial protein was thought to act as a proton transmembrane transporter from the mitochondrial intermembrane space into the matrix, causing proton leaks through the inner mitochondrial membrane, thereby uncoupling mitochondrial membrane potential generation from ATP synthesis. However, this function is controversial and uncoupling may not be the function, or at least not the main function, but rather a consequence of more conventional metabolite transporter activity. The sequence is that of Putative mitochondrial transporter UCP3 from Homo sapiens (Human).